A 157-amino-acid chain; its full sequence is 2-C-methyl-D-erythritol 2,4-cyclodiphosphate synthase (157 aa).

Asp8 and His10 together coordinate a divalent metal cation. 4-CDP-2-C-methyl-D-erythritol 2-phosphate is bound by residues Asp8–His10 and His34–Ser35. Residue His42 participates in a divalent metal cation binding. 4-CDP-2-C-methyl-D-erythritol 2-phosphate is bound by residues Asp56 to Gly58, Phe61 to Asp65, Ala100 to Ala106, Thr132 to Glu135, Phe139, and Arg142.

It belongs to the IspF family. Homotrimer. A divalent metal cation serves as cofactor.

The enzyme catalyses 4-CDP-2-C-methyl-D-erythritol 2-phosphate = 2-C-methyl-D-erythritol 2,4-cyclic diphosphate + CMP. Its pathway is isoprenoid biosynthesis; isopentenyl diphosphate biosynthesis via DXP pathway; isopentenyl diphosphate from 1-deoxy-D-xylulose 5-phosphate: step 4/6. Functionally, involved in the biosynthesis of isopentenyl diphosphate (IPP) and dimethylallyl diphosphate (DMAPP), two major building blocks of isoprenoid compounds. Catalyzes the conversion of 4-diphosphocytidyl-2-C-methyl-D-erythritol 2-phosphate (CDP-ME2P) to 2-C-methyl-D-erythritol 2,4-cyclodiphosphate (ME-CPP) with a corresponding release of cytidine 5-monophosphate (CMP). In Ectopseudomonas mendocina (strain ymp) (Pseudomonas mendocina), this protein is 2-C-methyl-D-erythritol 2,4-cyclodiphosphate synthase.